Here is a 150-residue protein sequence, read N- to C-terminus: Putative F-box protein At2g33655 (150 aa).

An F-box domain is found at Met-1–Ala-47.

The protein is Putative F-box protein At2g33655 of Arabidopsis thaliana (Mouse-ear cress).